We begin with the raw amino-acid sequence, 362 residues long: GTPase Obg (362 aa).

Positions 1–159 (MKFIDEARIE…RKLKLELKVL (159 aa)) constitute an Obg domain. The tract at residues 129–148 (HFKSSTNRAPRQKTNGKEGE) is disordered. Over residues 130–141 (FKSSTNRAPRQK) the composition is skewed to polar residues. Residues 160-334 (ADVGLLGMPN…LCYALQDYLD (175 aa)) form the OBG-type G domain. GTP is bound by residues 166 to 173 (GMPNAGKS), 191 to 195 (FTTLH), 213 to 216 (DIPG), 284 to 287 (NKVD), and 315 to 317 (SAL). S173 and T193 together coordinate Mg(2+). The tract at residues 340–362 (RDDAEERAADPRYQDQAADKSPD) is disordered.

This sequence belongs to the TRAFAC class OBG-HflX-like GTPase superfamily. OBG GTPase family. As to quaternary structure, monomer. Requires Mg(2+) as cofactor.

It is found in the cytoplasm. Functionally, an essential GTPase which binds GTP, GDP and possibly (p)ppGpp with moderate affinity, with high nucleotide exchange rates and a fairly low GTP hydrolysis rate. Plays a role in control of the cell cycle, stress response, ribosome biogenesis and in those bacteria that undergo differentiation, in morphogenesis control. This Polynucleobacter asymbioticus (strain DSM 18221 / CIP 109841 / QLW-P1DMWA-1) (Polynucleobacter necessarius subsp. asymbioticus) protein is GTPase Obg.